The primary structure comprises 432 residues: Enolase (432 aa).

Residue Q167 coordinates (2R)-2-phosphoglycerate. The active-site Proton donor is the E209. Residues D246, E290, and D317 each contribute to the Mg(2+) site. (2R)-2-phosphoglycerate-binding residues include K342, R371, S372, and K393. K342 acts as the Proton acceptor in catalysis.

The protein belongs to the enolase family. As to quaternary structure, component of the RNA degradosome, a multiprotein complex involved in RNA processing and mRNA degradation. It depends on Mg(2+) as a cofactor.

It is found in the cytoplasm. Its subcellular location is the secreted. It localises to the cell surface. The catalysed reaction is (2R)-2-phosphoglycerate = phosphoenolpyruvate + H2O. It functions in the pathway carbohydrate degradation; glycolysis; pyruvate from D-glyceraldehyde 3-phosphate: step 4/5. Functionally, catalyzes the reversible conversion of 2-phosphoglycerate (2-PG) into phosphoenolpyruvate (PEP). It is essential for the degradation of carbohydrates via glycolysis. In Escherichia coli O139:H28 (strain E24377A / ETEC), this protein is Enolase.